The chain runs to 98 residues: NADH-ubiquinone oxidoreductase chain 4L (98 aa).

3 helical membrane-spanning segments follow: residues M1–V21, L30–T50, and I61–I81.

This sequence belongs to the complex I subunit 4L family. Core subunit of respiratory chain NADH dehydrogenase (Complex I) which is composed of 45 different subunits.

The protein resides in the mitochondrion inner membrane. It carries out the reaction a ubiquinone + NADH + 5 H(+)(in) = a ubiquinol + NAD(+) + 4 H(+)(out). Functionally, core subunit of the mitochondrial membrane respiratory chain NADH dehydrogenase (Complex I) which catalyzes electron transfer from NADH through the respiratory chain, using ubiquinone as an electron acceptor. Part of the enzyme membrane arm which is embedded in the lipid bilayer and involved in proton translocation. This chain is NADH-ubiquinone oxidoreductase chain 4L (MT-ND4L), found in Lontra canadensis (North American river otter).